We begin with the raw amino-acid sequence, 210 residues long: 7-cyano-7-deazaguanine synthase 2 (210 aa).

10–20 lines the ATP pocket; sequence HSGGMDSTTCL. The Zn(2+) site is built by Cys-180, Cys-193, Cys-196, and Cys-199.

It belongs to the QueC family. It depends on Zn(2+) as a cofactor.

The enzyme catalyses 7-carboxy-7-deazaguanine + NH4(+) + ATP = 7-cyano-7-deazaguanine + ADP + phosphate + H2O + H(+). It functions in the pathway purine metabolism; 7-cyano-7-deazaguanine biosynthesis. In terms of biological role, catalyzes the ATP-dependent conversion of 7-carboxy-7-deazaguanine (CDG) to 7-cyano-7-deazaguanine (preQ(0)). This is 7-cyano-7-deazaguanine synthase 2 from Rhodopseudomonas palustris (strain HaA2).